Here is a 335-residue protein sequence, read N- to C-terminus: MIEAKSEHKIAPWKIEEVNALKELLKSSNIIALIDMMEVPAVQLQEIRDKIRDQMTLKMSRNTLMKRAIEEVAEETGNPEFAKLVDYMDKGAAIIATEMNPFKLYKTLDESKSPAPVKGGAIAPCDIEVKAGSTGMPPGPFLSELKAVGIPAAIDKGKIGIKEDKIVVKEGEVVSQKLAVVLSALDIKPVTVGLNVLGVYEDGVIYTESDLKIDEEEFVGKIQKAYTSAFNLSVNAVIPTSATVETIVQKAFNDAKAVSVESAFVTDKTADAILGKAYAQMIAVAGLAGDDALDEDLKGKISSGAAAPVEEAPVEEKKEEKKEEAAAPAGLGMLF.

Residues glycine 304–phenylalanine 335 form a disordered region. Residues valine 314–alanine 325 are compositionally biased toward basic and acidic residues.

The protein belongs to the universal ribosomal protein uL10 family. In terms of assembly, part of the 50S ribosomal subunit. Homodimer, it forms part of the ribosomal stalk which helps the ribosome interact with GTP-bound translation factors. Forms both a pentameric L10(L12)2(L12)2 and heptameric L10(L12)2(L12)2(L12)2 complex, where L10 forms an elongated spine to which the L12 dimers bind in a sequential fashion. The proportion of heptameric complexes increases during cell growth.

Functionally, forms part of the ribosomal stalk, playing a central role in the interaction of the ribosome with GTP-bound translation factors. In Methanococcus maripaludis (strain DSM 14266 / JCM 13030 / NBRC 101832 / S2 / LL), this protein is Large ribosomal subunit protein uL10.